A 449-amino-acid polypeptide reads, in one-letter code: Phosphoglucosamine mutase (449 aa).

Residue serine 105 is the Phosphoserine intermediate of the active site. Serine 105, aspartate 242, aspartate 244, and aspartate 246 together coordinate Mg(2+). Phosphoserine is present on serine 105.

It belongs to the phosphohexose mutase family. It depends on Mg(2+) as a cofactor. In terms of processing, activated by phosphorylation.

It carries out the reaction alpha-D-glucosamine 1-phosphate = D-glucosamine 6-phosphate. In terms of biological role, catalyzes the conversion of glucosamine-6-phosphate to glucosamine-1-phosphate. This is Phosphoglucosamine mutase from Clavibacter sepedonicus (Clavibacter michiganensis subsp. sepedonicus).